The sequence spans 202 residues: MYVGRFVVVSPEVGAYRVSSRSFPNRQAVQRDGTVTVEPTPDAPETDNPYISYNGVRVTERGAVVGNGSHVDPIAEKLELGYPARDAIAEPLLSLDFEKDDYDTPRVAGIVGVDAADPTTNADGPGAVIGTVRRDALLVEEVTEPTLVATYEENSPTAFDLAATDASDVAREVYDHEYEHAVCSAGVAGSAGEFDVAVYNGE.

The tract at residues 29–52 (VQRDGTVTVEPTPDAPETDNPYIS) is disordered.

The protein belongs to the archaeal IMP cyclohydrolase family.

It catalyses the reaction IMP + H2O = 5-formamido-1-(5-phospho-D-ribosyl)imidazole-4-carboxamide. It functions in the pathway purine metabolism; IMP biosynthesis via de novo pathway; IMP from 5-formamido-1-(5-phospho-D-ribosyl)imidazole-4-carboxamide: step 1/1. Catalyzes the cyclization of 5-formylamidoimidazole-4-carboxamide ribonucleotide to IMP. This chain is IMP cyclohydrolase, found in Haloarcula marismortui (strain ATCC 43049 / DSM 3752 / JCM 8966 / VKM B-1809) (Halobacterium marismortui).